The chain runs to 322 residues: NADH-quinone oxidoreductase subunit H (322 aa).

Transmembrane regions (helical) follow at residues 15–35, 82–102, 114–134, 149–169, 186–206, 243–263, 265–285, and 302–322; these read ILHI…LSIL, IFIL…PTIP, IGIL…LFAG, ASAQ…GVIA, VWNV…GIAL, ISII…YFGF, GSSF…FILI, and WKIC…FILI.

Belongs to the complex I subunit 1 family. NDH-1 is composed of 13 different subunits. Subunits NuoA, H, J, K, L, M, N constitute the membrane sector of the complex.

The protein localises to the cell membrane. The catalysed reaction is a quinone + NADH + 5 H(+)(in) = a quinol + NAD(+) + 4 H(+)(out). Functionally, NDH-1 shuttles electrons from NADH, via FMN and iron-sulfur (Fe-S) centers, to quinones in the respiratory chain. The immediate electron acceptor for the enzyme in this species is believed to be ubiquinone. Couples the redox reaction to proton translocation (for every two electrons transferred, four hydrogen ions are translocated across the cytoplasmic membrane), and thus conserves the redox energy in a proton gradient. This subunit may bind ubiquinone. In Buchnera aphidicola subsp. Schizaphis graminum (strain Sg), this protein is NADH-quinone oxidoreductase subunit H.